The chain runs to 137 residues: Actin-depolymerizing factor 12 (137 aa).

Serine 6 carries the post-translational modification Phosphoserine. The ADF-H domain occupies 7-137 (GMAVEDECKL…SLDIIKSRAL (131 aa)).

Belongs to the actin-binding proteins ADF family. In terms of tissue distribution, specifically expressed in pollen.

It localises to the cytoplasm. Its subcellular location is the cytoskeleton. Actin-depolymerizing protein. Severs actin filaments (F-actin) and binds to actin monomers. The sequence is that of Actin-depolymerizing factor 12 from Arabidopsis thaliana (Mouse-ear cress).